A 110-amino-acid chain; its full sequence is Iron-sulfur cluster assembly protein CyaY (110 aa).

Belongs to the frataxin family.

In terms of biological role, involved in iron-sulfur (Fe-S) cluster assembly. May act as a regulator of Fe-S biogenesis. The polypeptide is Iron-sulfur cluster assembly protein CyaY (Pseudomonas putida (strain W619)).